The primary structure comprises 215 residues: MKYELTAREARVIGCLLEKQVTTPEQYPLSLNGVVTACNQKTNREPVMNLSEQEVQTELDNLVKRHFLRTVSGFGNRVTKYEQRFCNSEFGDLKLSPAEVALITTLLLRGAQTPGELRSRAARMYEFSDMSEVDSTLEKLAQREDGPFVVRLAREPGKRESRYMHLFCGEVDDTASFAEETPPVAGELQARVEALENEVAELKQRLDSLLAHLGD.

Residue Lys80 is modified to N6-acetyllysine.

This sequence belongs to the UPF0502 family.

The polypeptide is UPF0502 protein YceH (Escherichia fergusonii (strain ATCC 35469 / DSM 13698 / CCUG 18766 / IAM 14443 / JCM 21226 / LMG 7866 / NBRC 102419 / NCTC 12128 / CDC 0568-73)).